The chain runs to 386 residues: S-adenosylmethionine synthase (386 aa).

Residue His14 coordinates ATP. Residue Asp16 coordinates Mg(2+). Glu42 contributes to the K(+) binding site. Residues Glu55 and Gln98 each coordinate L-methionine. The interval 98 to 108 is flexible loop; sequence QSGDISQGVDG. ATP is bound by residues 162-164, 230-231, Asp239, 245-246, Ala262, and Lys266; these read DSK, RF, and RK. Residue Asp239 coordinates L-methionine. Lys270 serves as a coordination point for L-methionine.

The protein belongs to the AdoMet synthase family. In terms of assembly, homotetramer; dimer of dimers. It depends on Mg(2+) as a cofactor. K(+) is required as a cofactor.

The protein localises to the cytoplasm. It carries out the reaction L-methionine + ATP + H2O = S-adenosyl-L-methionine + phosphate + diphosphate. It functions in the pathway amino-acid biosynthesis; S-adenosyl-L-methionine biosynthesis; S-adenosyl-L-methionine from L-methionine: step 1/1. Functionally, catalyzes the formation of S-adenosylmethionine (AdoMet) from methionine and ATP. The overall synthetic reaction is composed of two sequential steps, AdoMet formation and the subsequent tripolyphosphate hydrolysis which occurs prior to release of AdoMet from the enzyme. This chain is S-adenosylmethionine synthase, found in Salinibacter ruber (strain DSM 13855 / M31).